The chain runs to 330 residues: B-cell receptor CD22 (330 aa).

The signal sequence occupies residues 1–17; it reads MHLLGPWLLLLEYLAFS. One can recognise an Ig-like V-type domain in the interval 18-136; sequence DSSKWAFEHP…MERIHLNVSE (119 aa). Over 18-330 the chain is Extracellular; that stretch reads DSSKWAFEHP…VFLQVQYAPE (313 aa). Disulfide bonds link Cys37–Cys165, Cys42–Cys100, and Cys159–Cys217. N-linked (GlcNAc...) asparagine glycosylation is found at Asn65, Asn99, and Asn110. Position 118 (Arg118) interacts with N-acetylneuraminate. N-linked (GlcNAc...) asparagine glycans are attached at residues Asn133, Asn162, Asn187, and Asn229. Ig-like C2-type domains follow at residues 141-233 and 240-324; these read PHIQ…DTVQ and PKLK…VFLQ. An intrachain disulfide couples Cys263 to Cys307.

The protein belongs to the immunoglobulin superfamily. SIGLEC (sialic acid binding Ig-like lectin) family. As to quaternary structure, predominantly monomer of isoform CD22-beta. Also found as heterodimer of isoform CD22-beta and a shorter isoform. Interacts with PTPN6/SHP-1, LYN, SYK, PIK3R1/PIK3R2 and PLCG1 upon phosphorylation. Interacts with GRB2, INPP5D and SHC1 upon phosphorylation. May form a complex with INPP5D/SHIP, GRB2 and SHC1.

Its subcellular location is the cell membrane. Functionally, most highly expressed siglec (sialic acid-binding immunoglobulin-like lectin) on B-cells that plays a role in various aspects of B-cell biology including differentiation, antigen presentation, and trafficking to bone marrow. Binds to alpha 2,6-linked sialic acid residues of surface molecules such as CD22 itself, CD45 and IgM in a cis configuration. Can also bind to ligands on other cells as an adhesion molecule in a trans configuration. Acts as an inhibitory coreceptor on the surface of B-cells and inhibits B-cell receptor induced signaling, characterized by inhibition of the calcium mobilization and cellular activation. Mechanistically, the immunoreceptor tyrosine-based inhibitory motif domain is phosphorylated by the Src kinase LYN, which in turn leads to the recruitment of the protein tyrosine phosphatase 1/PTPN6, leading to the negative regulation of BCR signaling. If this negative signaling from is of sufficient strength, apoptosis of the B-cell can be induced. The polypeptide is B-cell receptor CD22 (Pongo pygmaeus (Bornean orangutan)).